Consider the following 49-residue polypeptide: Small, acid-soluble spore protein O (49 aa).

The segment at 1 to 49 is disordered; the sequence is MGKRKANHIVPGMNAASAQGQGTGYNEEFANEPLTAAQRQNNKKRKKNQ.

It belongs to the SspO family.

It is found in the spore core. The chain is Small, acid-soluble spore protein O from Bacillus cytotoxicus (strain DSM 22905 / CIP 110041 / 391-98 / NVH 391-98).